The primary structure comprises 102 residues: NADH-quinone oxidoreductase subunit K (102 aa).

3 helical membrane-spanning segments follow: residues 5–25, 31–51, and 65–85; these read LSHY…GIFL, IVIL…MVAF, and LFIL…LVVF.

Belongs to the complex I subunit 4L family. NDH-1 is composed of 14 different subunits. Subunits NuoA, H, J, K, L, M, N constitute the membrane sector of the complex.

It localises to the cell inner membrane. It catalyses the reaction a quinone + NADH + 5 H(+)(in) = a quinol + NAD(+) + 4 H(+)(out). NDH-1 shuttles electrons from NADH, via FMN and iron-sulfur (Fe-S) centers, to quinones in the respiratory chain. The immediate electron acceptor for the enzyme in this species is believed to be ubiquinone. Couples the redox reaction to proton translocation (for every two electrons transferred, four hydrogen ions are translocated across the cytoplasmic membrane), and thus conserves the redox energy in a proton gradient. The polypeptide is NADH-quinone oxidoreductase subunit K (Agrobacterium fabrum (strain C58 / ATCC 33970) (Agrobacterium tumefaciens (strain C58))).